Here is a 274-residue protein sequence, read N- to C-terminus: uncharacterized protein (274 aa).

The segment covering 1-15 has biased composition (basic and acidic residues); it reads MEESKTKRKEDRIDL. Residues 1-40 form a disordered region; the sequence is MEESKTKRKEDRIDLKNTPPQKKSKRDSTNDETARTSLRS. Residues 41–87 enclose the G-patch domain; sequence IMPRGYKMMENMGYKEGETLGSNESALKEPIKVEINTKRRGIRAEKP.

The protein localises to the cytoplasm. It is found in the nucleus. This is an uncharacterized protein from Saccharomyces cerevisiae (strain ATCC 204508 / S288c) (Baker's yeast).